The following is a 156-amino-acid chain: Ribosomal RNA large subunit methyltransferase H (156 aa).

Residues L73, G104, and 123–128 (LSSLTL) contribute to the S-adenosyl-L-methionine site.

The protein belongs to the RNA methyltransferase RlmH family. Homodimer.

Its subcellular location is the cytoplasm. It carries out the reaction pseudouridine(1915) in 23S rRNA + S-adenosyl-L-methionine = N(3)-methylpseudouridine(1915) in 23S rRNA + S-adenosyl-L-homocysteine + H(+). In terms of biological role, specifically methylates the pseudouridine at position 1915 (m3Psi1915) in 23S rRNA. The sequence is that of Ribosomal RNA large subunit methyltransferase H from Neisseria meningitidis serogroup A / serotype 4A (strain DSM 15465 / Z2491).